The sequence spans 510 residues: Monocarboxylate transporter 14 (510 aa).

At 1–27 (MYTSHEDIGYDFEDGPKDKKTLKPHPN) the chain is on the cytoplasmic side. A run of 6 helical transmembrane segments spans residues 28-48 (IDGG…ILIM), 74-94 (WVSS…GLFI), 103-123 (AIIG…AANV), 127-147 (FITF…PAVV), 159-179 (LAQG…TVLL), and 191-209 (AMLI…GALM). The segment at 214–255 (PGKNPNDPGEKDVRGLPAHSTESVKSTGQQGRTEEKDGGLGN) is disordered. Over residues 233-244 (STESVKSTGQQG) the composition is skewed to polar residues. 6 helical membrane-spanning segments follow: residues 315-335 (MFVA…IPFI), 353-373 (FPLT…LGVI), 379-399 (ISVW…IFIL), 408-428 (LAVI…MPVV), 443-463 (GIII…AGWI), and 474-494 (FYIC…QPCI). Residues 495–510 (RIIEQSRRKYMDGAHV) are Cytoplasmic-facing.

The protein belongs to the major facilitator superfamily. Monocarboxylate porter (TC 2.A.1.13) family.

The protein localises to the cell membrane. Proton-linked monocarboxylate transporter. May catalyze the transport of monocarboxylates across the plasma membrane. The sequence is that of Monocarboxylate transporter 14 (SLC16A14) from Homo sapiens (Human).